The sequence spans 382 residues: Gap junction alpha-1 protein (382 aa).

The Cytoplasmic portion of the chain corresponds to 2–23 (GDWSALGKLLDKVQAYSTAGGK). A Phosphoserine modification is found at serine 5. A helical transmembrane segment spans residues 24 to 44 (VWLSVLFIFRILLLGTAVESA). Residues 45–76 (WGDEQSAFRCNTQQPGCENVCYDKSFPISHVR) lie on the Extracellular side of the membrane. Intrachain disulfides connect cysteine 54/cysteine 192 and cysteine 187/cysteine 198. Residues 77–97 (FWVLQIIFVSVPTLLYLAHVF) form a helical membrane-spanning segment. Residues 98 to 155 (YVMRKEEKLNKKEEELKVAQTDGVNVEMHLKQIEIKKFKYGIEEHGKVKMRGGLLRTY) are Cytoplasmic-facing. A Glycyl lysine isopeptide (Lys-Gly) (interchain with G-Cter in SUMO) cross-link involves residue lysine 144. The helical transmembrane segment at 156–176 (IISILFKSIFEVAFLLIQWYI) threads the bilayer. At 177–207 (YGFSLSAVYTCKRDPCPHQVDCFLSRPTEKT) the chain is on the extracellular side. Residues 208–228 (IFIIFMLVVSLVSLALNIIEL) form a helical membrane-spanning segment. Residues 229 to 382 (FYVFFKGVKD…SRPRPDDLEI (154 aa)) lie on the Cytoplasmic side of the membrane. Residue lysine 237 forms a Glycyl lysine isopeptide (Lys-Gly) (interchain with G-Cter in SUMO) linkage. The interval 244–382 (SDPYHTTSGA…SRPRPDDLEI (139 aa)) is interaction with NOV. Tyrosine 247 bears the Phosphotyrosine mark. A phosphoserine mark is found at serine 255 and serine 262. Positions 264–382 (KYAYFNGCSS…SRPRPDDLEI (119 aa)) are interaction with UBQLN4. Cysteine 271 is modified (S-nitrosocysteine). Threonine 275 bears the Phosphothreonine mark. Serine 306 and serine 314 each carry phosphoserine. Residues 317–332 (QNRMGQAGSTISNSHA) are compositionally biased toward polar residues. The interval 317-382 (QNRMGQAGST…SRPRPDDLEI (66 aa)) is disordered. A Phosphoserine; by CK1 modification is found at serine 325. Threonine 326 is subject to Phosphothreonine. Residues serine 328 and serine 330 each carry the phosphoserine; by CK1 modification. Phosphoserine occurs at positions 344 and 365. A compositionally biased stretch (low complexity) spans 362 to 374 (RPSSRASSRASSR). Serine 368 is modified (phosphoserine; by PKC/PRKCG and PKC/PRKCD). Residues serine 369 and serine 373 each carry the phosphoserine modification.

Belongs to the connexin family. Alpha-type (group II) subfamily. In terms of assembly, a connexon is composed of a hexamer of connexins. Interacts with SGSM3. Interacts with RIC1/CIP150. Interacts with CNST and CSNK1D. Interacts (via C-terminus) with TJP1. Interacts (via C-terminus) with SRC (via SH3 domain). Interacts (not ubiquitinated) with UBQLN4 (via UBA domain). Interacts with NOV. Interacts with TMEM65. Interacts with ANK3/ANKG and PKP2. Phosphorylation at Ser-325, Ser-328 and Ser-330 by CK1 modulates gap junction assembly. Phosphorylated at Ser-368 by PRKCG; phosphorylation induces disassembly of gap junction plaques and inhibition of gap junction activity. Phosphorylation at Ser-368 by PRKCD triggers its internalization into small vesicles leading to proteasome-mediated degradation. In terms of processing, sumoylated with SUMO1, SUMO2 and SUMO3, which may regulate the level of functional Cx43 gap junctions at the plasma membrane. May be desumoylated by SENP1 or SENP2. Post-translationally, S-nitrosylation at Cys-271 is enriched at the muscle endothelial gap junction in arteries, it augments channel permeability and may regulate of smooth muscle cell to endothelial cell communication. Acetylated in the developing cortex; leading to delocalization from the cell membrane.

The protein resides in the cell membrane. Its subcellular location is the cell junction. It localises to the gap junction. The protein localises to the endoplasmic reticulum. Gap junction protein that acts as a regulator of bladder capacity. A gap junction consists of a cluster of closely packed pairs of transmembrane channels, the connexons, through which materials of low MW diffuse from one cell to a neighboring cell. May play a critical role in the physiology of hearing by participating in the recycling of potassium to the cochlear endolymph. Negative regulator of bladder functional capacity: acts by enhancing intercellular electrical and chemical transmission, thus sensitizing bladder muscles to cholinergic neural stimuli and causing them to contract. May play a role in cell growth inhibition through the regulation of NOV expression and localization. Plays an essential role in gap junction communication in the ventricles. This chain is Gap junction alpha-1 protein (GJA1), found in Chlorocebus aethiops (Green monkey).